Consider the following 103-residue polypeptide: ATP synthase F(0) complex subunit g, mitochondrial (103 aa).

An N-acetylalanine modification is found at alanine 2. N6-acetyllysine is present on residues lysine 11, lysine 24, lysine 35, and lysine 54.

This sequence belongs to the ATPase g subunit family. As to quaternary structure, component of the ATP synthase complex composed at least of ATP5F1A/subunit alpha, ATP5F1B/subunit beta, ATP5MC1/subunit c (homooctomer), MT-ATP6/subunit a, MT-ATP8/subunit 8, ATP5ME/subunit e, ATP5MF/subunit f, ATP5MG/subunit g, ATP5MK/subunit k, ATP5MJ/subunit j, ATP5F1C/subunit gamma, ATP5F1D/subunit delta, ATP5F1E/subunit epsilon, ATP5PF/subunit F6, ATP5PB/subunit b, ATP5PD/subunit d, ATP5PO/subunit OSCP. ATP synthase complex consists of a soluble F(1) head domain (subunits alpha(3) and beta(3)) - the catalytic core - and a membrane F(0) domain - the membrane proton channel (subunits c, a, 8, e, f, g, k and j). These two domains are linked by a central stalk (subunits gamma, delta, and epsilon) rotating inside the F1 region and a stationary peripheral stalk (subunits F6, b, d, and OSCP).

It is found in the mitochondrion. The protein localises to the mitochondrion inner membrane. In terms of biological role, subunit g, of the mitochondrial membrane ATP synthase complex (F(1)F(0) ATP synthase or Complex V) that produces ATP from ADP in the presence of a proton gradient across the membrane which is generated by electron transport complexes of the respiratory chain. ATP synthase complex consist of a soluble F(1) head domain - the catalytic core - and a membrane F(1) domain - the membrane proton channel. These two domains are linked by a central stalk rotating inside the F(1) region and a stationary peripheral stalk. During catalysis, ATP synthesis in the catalytic domain of F(1) is coupled via a rotary mechanism of the central stalk subunits to proton translocation. In vivo, can only synthesize ATP although its ATP hydrolase activity can be activated artificially in vitro. Part of the complex F(0) domain. The polypeptide is ATP synthase F(0) complex subunit g, mitochondrial (Pongo abelii (Sumatran orangutan)).